Consider the following 494-residue polypeptide: Aspartyl/glutamyl-tRNA(Asn/Gln) amidotransferase subunit B (494 aa).

The protein belongs to the GatB/GatE family. GatB subfamily. As to quaternary structure, heterotrimer of A, B and C subunits.

The enzyme catalyses L-glutamyl-tRNA(Gln) + L-glutamine + ATP + H2O = L-glutaminyl-tRNA(Gln) + L-glutamate + ADP + phosphate + H(+). The catalysed reaction is L-aspartyl-tRNA(Asn) + L-glutamine + ATP + H2O = L-asparaginyl-tRNA(Asn) + L-glutamate + ADP + phosphate + 2 H(+). Functionally, allows the formation of correctly charged Asn-tRNA(Asn) or Gln-tRNA(Gln) through the transamidation of misacylated Asp-tRNA(Asn) or Glu-tRNA(Gln) in organisms which lack either or both of asparaginyl-tRNA or glutaminyl-tRNA synthetases. The reaction takes place in the presence of glutamine and ATP through an activated phospho-Asp-tRNA(Asn) or phospho-Glu-tRNA(Gln). The sequence is that of Aspartyl/glutamyl-tRNA(Asn/Gln) amidotransferase subunit B from Synechococcus sp. (strain ATCC 27144 / PCC 6301 / SAUG 1402/1) (Anacystis nidulans).